The chain runs to 576 residues: Eukaryotic translation initiation factor 3 subunit L (576 aa).

Residues 330–536 (DAIRVFANIL…IHIADTKVAR (207 aa)) enclose the PCI domain.

It belongs to the eIF-3 subunit L family. In terms of assembly, component of the eukaryotic translation initiation factor 3 (eIF-3) complex, which is composed of 13 subunits: eif3a, eif3b, eif3c, eif3d, eif3e, eif3f, eif3g, eif3h, eif3i, eif3j, eif3k, eif3l and eif3m.

The protein resides in the cytoplasm. Its function is as follows. Component of the eukaryotic translation initiation factor 3 (eIF-3) complex, which is involved in protein synthesis of a specialized repertoire of mRNAs and, together with other initiation factors, stimulates binding of mRNA and methionyl-tRNAi to the 40S ribosome. The eIF-3 complex specifically targets and initiates translation of a subset of mRNAs involved in cell proliferation. The polypeptide is Eukaryotic translation initiation factor 3 subunit L (eif3l) (Danio rerio (Zebrafish)).